Here is a 141-residue protein sequence, read N- to C-terminus: Endoribonuclease YbeY (141 aa).

Zn(2+) contacts are provided by His-100, His-104, and His-110.

The protein belongs to the endoribonuclease YbeY family. It depends on Zn(2+) as a cofactor.

The protein resides in the cytoplasm. Single strand-specific metallo-endoribonuclease involved in late-stage 70S ribosome quality control and in maturation of the 3' terminus of the 16S rRNA. The polypeptide is Endoribonuclease YbeY (Helicobacter pylori (strain J99 / ATCC 700824) (Campylobacter pylori J99)).